The sequence spans 632 residues: Chaperone protein DnaK (632 aa).

The residue at position 198 (Thr-198) is a Phosphothreonine; by autocatalysis. Residues 599–632 (YKKAGASQQGAGSTTQSKKEEDVIEAEVEDKDNK) are disordered. Residues 604–614 (ASQQGAGSTTQ) show a composition bias toward polar residues. Positions 620-632 (DVIEAEVEDKDNK) are enriched in acidic residues.

This sequence belongs to the heat shock protein 70 family.

In terms of biological role, acts as a chaperone. The chain is Chaperone protein DnaK from Thermodesulfovibrio yellowstonii (strain ATCC 51303 / DSM 11347 / YP87).